The following is a 375-amino-acid chain: tRNA-specific 2-thiouridylase MnmA (375 aa).

ATP-binding positions include 9–16 (AMSGGVDS) and L35. C105 serves as the catalytic Nucleophile. C105 and C201 are joined by a disulfide. G129 contributes to the ATP binding site. Residues 151-153 (KNQ) are interaction with tRNA. C201 functions as the Cysteine persulfide intermediate in the catalytic mechanism. An interaction with tRNA region spans residues 307 to 308 (RY).

It belongs to the MnmA/TRMU family.

The protein localises to the cytoplasm. The enzyme catalyses S-sulfanyl-L-cysteinyl-[protein] + uridine(34) in tRNA + AH2 + ATP = 2-thiouridine(34) in tRNA + L-cysteinyl-[protein] + A + AMP + diphosphate + H(+). Catalyzes the 2-thiolation of uridine at the wobble position (U34) of tRNA, leading to the formation of s(2)U34. The protein is tRNA-specific 2-thiouridylase MnmA of Leptospira interrogans serogroup Icterohaemorrhagiae serovar Lai (strain 56601).